The chain runs to 443 residues: ATP-dependent protease ATPase subunit HslU (443 aa).

Residues Ile-18 and 60 to 65 (GVGKTE) each bind ATP. A disordered region spans residues 141 to 165 (DQWGQNEENDTDSSTRQSFRKKLRE). The ATP site is built by Asp-256, Glu-321, and Arg-393.

This sequence belongs to the ClpX chaperone family. HslU subfamily. As to quaternary structure, a double ring-shaped homohexamer of HslV is capped on each side by a ring-shaped HslU homohexamer. The assembly of the HslU/HslV complex is dependent on binding of ATP.

It is found in the cytoplasm. Its function is as follows. ATPase subunit of a proteasome-like degradation complex; this subunit has chaperone activity. The binding of ATP and its subsequent hydrolysis by HslU are essential for unfolding of protein substrates subsequently hydrolyzed by HslV. HslU recognizes the N-terminal part of its protein substrates and unfolds these before they are guided to HslV for hydrolysis. This is ATP-dependent protease ATPase subunit HslU from Photobacterium profundum (strain SS9).